Here is a 64-residue protein sequence, read N- to C-terminus: Chassatide C7 (64 aa).

A propeptide spans 1–35 (VLVASLVMLEAQSSDTIQVPDWGKRLLMNHDSNRV) (removed in mature form). 3 cysteine pairs are disulfide-bonded: Cys-39–Cys-55, Cys-43–Cys-57, and Cys-48–Cys-62.

As to expression, expressed in fruit, pedicel, root and stem but not in leaf (at protein level).

Probably participates in a plant defense mechanism. Active against E.coli ATTC25922 but not against S.aureus ATCC 12600 or S.epidermidis ATCC 14990. Has cytotoxic and hemolytic activity. This chain is Chassatide C7, found in Chassalia chartacea (Chassalia curviflora).